A 312-amino-acid chain; its full sequence is Light-independent protochlorophyllide reductase iron-sulfur ATP-binding protein (312 aa).

Residues 55–60 (GIGKST) and Lys84 contribute to the ATP site. Ser59 provides a ligand contact to Mg(2+). Residues Cys140 and Cys174 each coordinate [4Fe-4S] cluster. Residues 225-226 (NR) and 249-251 (PDL) contribute to the ATP site.

It belongs to the NifH/BchL/ChlL family. In terms of assembly, homodimer. Protochlorophyllide reductase is composed of three subunits; BchL, BchN and BchB. [4Fe-4S] cluster is required as a cofactor.

It carries out the reaction chlorophyllide a + oxidized 2[4Fe-4S]-[ferredoxin] + 2 ADP + 2 phosphate = protochlorophyllide a + reduced 2[4Fe-4S]-[ferredoxin] + 2 ATP + 2 H2O. It functions in the pathway porphyrin-containing compound metabolism; bacteriochlorophyll biosynthesis (light-independent). Functionally, component of the dark-operative protochlorophyllide reductase (DPOR) that uses Mg-ATP and reduced ferredoxin to reduce ring D of protochlorophyllide (Pchlide) to form chlorophyllide a (Chlide). This reaction is light-independent. The L component serves as a unique electron donor to the NB-component of the complex, and binds Mg-ATP. This chain is Light-independent protochlorophyllide reductase iron-sulfur ATP-binding protein, found in Rhodopseudomonas palustris (strain ATCC BAA-98 / CGA009).